Here is a 284-residue protein sequence, read N- to C-terminus: Efem/EfeO family lipoprotein (284 aa).

The signal sequence occupies residues 1-17; that stretch reads MKKLTTLLLASTLLIAA. The N-palmitoyl cysteine moiety is linked to residue C18. The S-diacylglycerol cysteine moiety is linked to residue C18.

The protein belongs to the EfeM/EfeO family.

It localises to the cell membrane. The sequence is that of Efem/EfeO family lipoprotein from Staphylococcus aureus (strain USA300).